The following is a 206-amino-acid chain: Cytochrome b-245 chaperone 1 homolog (206 aa).

Residues 21–43 (GIRSWSILVGIASVGLAAAYYSS) form a helical membrane-spanning segment. The segment at 172–206 (ADDDYPDDDDGIEDLGLGDSSDSQDDPDGDDDEEH) is disordered. 2 stretches are compositionally biased toward acidic residues: residues 174-184 (DDYPDDDDGIE) and 193-206 (DSQD…DEEH).

Belongs to the CYBC1 family.

It localises to the endoplasmic reticulum membrane. In terms of biological role, functions as a chaperone necessary for a stable expression of the CYBA and CYBB subunits of the cytochrome b-245 heterodimer. This chain is Cytochrome b-245 chaperone 1 homolog, found in Danio rerio (Zebrafish).